The following is a 208-amino-acid chain: N-(5'-phosphoribosyl)anthranilate isomerase (208 aa).

This sequence belongs to the TrpF family.

It catalyses the reaction N-(5-phospho-beta-D-ribosyl)anthranilate = 1-(2-carboxyphenylamino)-1-deoxy-D-ribulose 5-phosphate. It participates in amino-acid biosynthesis; L-tryptophan biosynthesis; L-tryptophan from chorismate: step 3/5. The sequence is that of N-(5'-phosphoribosyl)anthranilate isomerase from Methanococcus vannielii (strain ATCC 35089 / DSM 1224 / JCM 13029 / OCM 148 / SB).